A 355-amino-acid polypeptide reads, in one-letter code: Fe-S cluster assembly protein DRE2 (355 aa).

The N-terminal SAM-like domain stretch occupies residues 23 to 156 (TSFNPRTLLL…KPDYSASVAV (134 aa)). A linker region spans residues 157-247 (PLRLRRKDNS…EDTLLTEEDM (91 aa)). The segment at 189–214 (RKSVDMTDDVPEKDVPKVDSPKNDAP) is disordered. Residues 190-213 (KSVDMTDDVPEKDVPKVDSPKNDA) show a composition bias toward basic and acidic residues. Residues cysteine 257, cysteine 268, cysteine 271, and cysteine 273 each coordinate [2Fe-2S] cluster. The fe-S binding site A stretch occupies residues 257–273 (CAPRAGKRRRACKDCTC). Positions 318, 321, 329, and 332 each coordinate [4Fe-4S] cluster. 2 consecutive short sequence motifs (cx2C motif) follow at residues 318 to 321 (CGNC) and 329 to 332 (CDGC). The fe-S binding site B stretch occupies residues 318 to 332 (CGNCSLGDAFRCDGC).

It belongs to the anamorsin family. In terms of assembly, monomer. Interacts with TAH18. Interacts with MIA40. The cofactor is [2Fe-2S] cluster. [4Fe-4S] cluster serves as cofactor.

Its subcellular location is the cytoplasm. It is found in the mitochondrion intermembrane space. Component of the cytosolic iron-sulfur (Fe-S) protein assembly (CIA) machinery required for the maturation of extramitochondrial Fe-S proteins. Part of an electron transfer chain functioning in an early step of cytosolic Fe-S biogenesis, facilitating the de novo assembly of a [4Fe-4S] cluster on the scaffold complex CFD1-NBP35. Electrons are transferred to DRE2 from NADPH via the FAD- and FMN-containing protein TAH18. TAH18-DRE2 are also required for the assembly of the diferric tyrosyl radical cofactor of ribonucleotide reductase (RNR), probably by providing electrons for reduction during radical cofactor maturation in the catalytic small subunit RNR2. The protein is Fe-S cluster assembly protein DRE2 of Botryotinia fuckeliana (strain B05.10) (Noble rot fungus).